A 73-amino-acid polypeptide reads, in one-letter code: uncharacterized protein (73 aa).

Residues 48–73 form a disordered region; the sequence is AKEPEKKTPSMEAKATSLSPNKASAS. Polar residues predominate over residues 63-73; that stretch reads TSLSPNKASAS.

This is an uncharacterized protein from Saccharomyces cerevisiae (strain ATCC 204508 / S288c) (Baker's yeast).